Consider the following 173-residue polypeptide: Crossover junction endodeoxyribonuclease RuvC (173 aa).

Residues Asp8, Glu67, and Asp139 contribute to the active site. Mg(2+)-binding residues include Asp8, Glu67, and Asp139.

It belongs to the RuvC family. As to quaternary structure, homodimer which binds Holliday junction (HJ) DNA. The HJ becomes 2-fold symmetrical on binding to RuvC with unstacked arms; it has a different conformation from HJ DNA in complex with RuvA. In the full resolvosome a probable DNA-RuvA(4)-RuvB(12)-RuvC(2) complex forms which resolves the HJ. Mg(2+) serves as cofactor.

The protein localises to the cytoplasm. The enzyme catalyses Endonucleolytic cleavage at a junction such as a reciprocal single-stranded crossover between two homologous DNA duplexes (Holliday junction).. In terms of biological role, the RuvA-RuvB-RuvC complex processes Holliday junction (HJ) DNA during genetic recombination and DNA repair. Endonuclease that resolves HJ intermediates. Cleaves cruciform DNA by making single-stranded nicks across the HJ at symmetrical positions within the homologous arms, yielding a 5'-phosphate and a 3'-hydroxyl group; requires a central core of homology in the junction. The consensus cleavage sequence is 5'-(A/T)TT(C/G)-3'. Cleavage occurs on the 3'-side of the TT dinucleotide at the point of strand exchange. HJ branch migration catalyzed by RuvA-RuvB allows RuvC to scan DNA until it finds its consensus sequence, where it cleaves and resolves the cruciform DNA. The chain is Crossover junction endodeoxyribonuclease RuvC from Salmonella dublin (strain CT_02021853).